We begin with the raw amino-acid sequence, 269 residues long: MNRYQETFKRLSCLKEGCFIPFVVLGDPSLETSIKIIETLIKSGADALEIGIPFSDPLADGPTVQKSNLRALSKNNTFFEYFKILKQLRKKNKKLPIGILIYANLVYNQGIDNFYFQCFNSGLDSVLIADVPIEESKIFYNIANKYKINPIFICPPDADADFLYKISLYAQGFIYVLSRPGVTGIKNNTIALPRDFINKIKKYNSVPLLQGFGISNPKQIKEAISSGLSGVICGSAIINIIEKYLNQEKKMIKEIKKFTHLLKLSTKLE.

Active-site proton acceptor residues include E49 and D60.

The protein belongs to the TrpA family. Tetramer of two alpha and two beta chains.

It carries out the reaction (1S,2R)-1-C-(indol-3-yl)glycerol 3-phosphate + L-serine = D-glyceraldehyde 3-phosphate + L-tryptophan + H2O. Its pathway is amino-acid biosynthesis; L-tryptophan biosynthesis; L-tryptophan from chorismate: step 5/5. In terms of biological role, the alpha subunit is responsible for the aldol cleavage of indoleglycerol phosphate to indole and glyceraldehyde 3-phosphate. The protein is Tryptophan synthase alpha chain of Buchnera aphidicola subsp. Acyrthosiphon pisum (strain APS) (Acyrthosiphon pisum symbiotic bacterium).